The sequence spans 160 residues: MGDKIAVIPGTFDPITNGHLDIIERAAKIFDVLYVSVLNNSSKKPLFTIEERMEMIRQVTAHLPNVQVESASGLTVDYAATRGATAIVRGLRAVSDFEYEMQIASMNRTLNADIETFFVMTNTKYSFLSSSMVKEVAQYQGDISELVPEIVNKAVQAKFK.

Thr-11 is a binding site for substrate. ATP is bound by residues 11–12 (TF) and His-19. 3 residues coordinate substrate: Lys-43, Thr-75, and Arg-89. Residues 90 to 92 (GLR), Glu-100, and 125 to 131 (YSFLSSS) each bind ATP.

This sequence belongs to the bacterial CoaD family. As to quaternary structure, homohexamer. Mg(2+) serves as cofactor.

The protein resides in the cytoplasm. It carries out the reaction (R)-4'-phosphopantetheine + ATP + H(+) = 3'-dephospho-CoA + diphosphate. It functions in the pathway cofactor biosynthesis; coenzyme A biosynthesis; CoA from (R)-pantothenate: step 4/5. Reversibly transfers an adenylyl group from ATP to 4'-phosphopantetheine, yielding dephospho-CoA (dPCoA) and pyrophosphate. The sequence is that of Phosphopantetheine adenylyltransferase from Listeria monocytogenes serovar 1/2a (strain ATCC BAA-679 / EGD-e).